The primary structure comprises 776 residues: Transcription activator of gluconeogenesis HCAG_03671 (776 aa).

Positions 1 to 70 (MTASTQNGSP…NAKDPLRPRR (70 aa)) are disordered. Polar residues-rich tracts occupy residues 21-41 (NQESKNMTANPADASESQSPA) and 50-60 (ENGQKHTSTAA). Positions 77 to 105 (CFACQRAHLTCGDERPCQRCIKRGLQDAC) form a DNA-binding region, zn(2)-C6 fungal-type. Disordered regions lie at residues 140 to 159 (RTNASQQQNGPNSNSNKDSR), 179 to 248 (TQAK…PFGA), 286 to 351 (GAGD…NIYN), 556 to 593 (NLNVNTGGSSPRGSGTFTPRNGNGVDPHSGMSASGGGG), and 651 to 726 (REAQ…SPKQ). The span at 142–155 (NASQQQNGPNSNSN) shows a compositional bias: low complexity. The segment covering 195–217 (MQDTSINPSAFQAPSPTSTPNFD) has biased composition (polar residues). The span at 218–229 (LSSNPPNRNLSS) shows a compositional bias: low complexity. 4 stretches are compositionally biased toward polar residues: residues 230–244 (AMTQTPSSASNQTQD), 292–322 (PSDSATQRGSIGRSSGTFTAQNFGDSTNTQP), 334–351 (WNPSGQSQTNPRNNNIYN), and 557–576 (LNVNTGGSSPRGSGTFTPRN). Residues 657-669 (GPDGKGGGGGGGD) show a composition bias toward gly residues. Low complexity predominate over residues 670 to 714 (VATTAATTSTSTSNGANSSGHANANRNNTNPNNSSPPSSSSAAAA).

This sequence belongs to the ERT1/acuK family.

The protein resides in the nucleus. Functionally, transcription factor which regulates nonfermentable carbon utilization. Activator of gluconeogenetic genes. This chain is Transcription activator of gluconeogenesis HCAG_03671, found in Ajellomyces capsulatus (strain NAm1 / WU24) (Darling's disease fungus).